The chain runs to 868 residues: Aconitate hydratase B (868 aa).

Residues Arg-192, 235–237 (SSR), 404–406 (QDT), and Ser-488 contribute to the substrate site. 3 residues coordinate [4Fe-4S] cluster: Cys-700, Cys-758, and Cys-761. Substrate is bound by residues Arg-780 and Arg-785.

The protein belongs to the aconitase/IPM isomerase family. Monomer. [4Fe-4S] cluster serves as cofactor.

The catalysed reaction is citrate = D-threo-isocitrate. It carries out the reaction (2S,3R)-3-hydroxybutane-1,2,3-tricarboxylate = 2-methyl-cis-aconitate + H2O. The protein operates within carbohydrate metabolism; tricarboxylic acid cycle; isocitrate from oxaloacetate: step 2/2. It participates in organic acid metabolism; propanoate degradation. In terms of biological role, involved in the catabolism of short chain fatty acids (SCFA) via the tricarboxylic acid (TCA)(acetyl degradation route) and probably via the 2-methylcitrate cycle I (propionate degradation route). Catalyzes the reversible isomerization of citrate to isocitrate via cis-aconitate. Catalyzes the hydration of 2-methyl-cis-aconitate to yield (2R,3S)-2-methylisocitrate. The apo form of AcnB functions as a RNA-binding regulatory protein. The protein is Aconitate hydratase B (acnB) of Synechocystis sp. (strain ATCC 27184 / PCC 6803 / Kazusa).